A 255-amino-acid polypeptide reads, in one-letter code: tRNA (guanine-N(1)-)-methyltransferase (255 aa).

S-adenosyl-L-methionine is bound by residues Gly113 and 133-138 (IGDYVL).

Belongs to the RNA methyltransferase TrmD family. In terms of assembly, homodimer.

The protein localises to the cytoplasm. The catalysed reaction is guanosine(37) in tRNA + S-adenosyl-L-methionine = N(1)-methylguanosine(37) in tRNA + S-adenosyl-L-homocysteine + H(+). Specifically methylates guanosine-37 in various tRNAs. The protein is tRNA (guanine-N(1)-)-methyltransferase of Mannheimia succiniciproducens (strain KCTC 0769BP / MBEL55E).